Here is a 338-residue protein sequence, read N- to C-terminus: 4-hydroxy-3-methylbut-2-enyl diphosphate reductase (338 aa).

C21 contributes to the [4Fe-4S] cluster binding site. (2E)-4-hydroxy-3-methylbut-2-enyl diphosphate-binding residues include H50 and H83. Positions 50 and 83 each coordinate dimethylallyl diphosphate. The isopentenyl diphosphate site is built by H50 and H83. C105 serves as a coordination point for [4Fe-4S] cluster. (2E)-4-hydroxy-3-methylbut-2-enyl diphosphate is bound at residue H133. A dimethylallyl diphosphate-binding site is contributed by H133. H133 lines the isopentenyl diphosphate pocket. E135 (proton donor) is an active-site residue. T173 provides a ligand contact to (2E)-4-hydroxy-3-methylbut-2-enyl diphosphate. A [4Fe-4S] cluster-binding site is contributed by C203. The (2E)-4-hydroxy-3-methylbut-2-enyl diphosphate site is built by S231, S232, N233, and S276. Residues S231, S232, N233, and S276 each coordinate dimethylallyl diphosphate. Isopentenyl diphosphate-binding residues include S231, S232, N233, and S276.

This sequence belongs to the IspH family. Requires [4Fe-4S] cluster as cofactor.

It catalyses the reaction isopentenyl diphosphate + 2 oxidized [2Fe-2S]-[ferredoxin] + H2O = (2E)-4-hydroxy-3-methylbut-2-enyl diphosphate + 2 reduced [2Fe-2S]-[ferredoxin] + 2 H(+). The catalysed reaction is dimethylallyl diphosphate + 2 oxidized [2Fe-2S]-[ferredoxin] + H2O = (2E)-4-hydroxy-3-methylbut-2-enyl diphosphate + 2 reduced [2Fe-2S]-[ferredoxin] + 2 H(+). The protein operates within isoprenoid biosynthesis; dimethylallyl diphosphate biosynthesis; dimethylallyl diphosphate from (2E)-4-hydroxy-3-methylbutenyl diphosphate: step 1/1. It participates in isoprenoid biosynthesis; isopentenyl diphosphate biosynthesis via DXP pathway; isopentenyl diphosphate from 1-deoxy-D-xylulose 5-phosphate: step 6/6. Functionally, catalyzes the conversion of 1-hydroxy-2-methyl-2-(E)-butenyl 4-diphosphate (HMBPP) into a mixture of isopentenyl diphosphate (IPP) and dimethylallyl diphosphate (DMAPP). Acts in the terminal step of the DOXP/MEP pathway for isoprenoid precursor biosynthesis. This is 4-hydroxy-3-methylbut-2-enyl diphosphate reductase from Streptomyces coelicolor (strain ATCC BAA-471 / A3(2) / M145).